The primary structure comprises 348 residues: Acetylesterase (348 aa).

A signal peptide spans 1–16 (MRSILVIPSFVAVLNA). N-linked (GlcNAc...) asparagine glycosylation is found at N64, N165, N218, N223, and N297.

It belongs to the carbohydrate esterase CE16 family. N-glycosylated.

Its subcellular location is the secreted. It catalyses the reaction an acetyl ester + H2O = an aliphatic alcohol + acetate + H(+). Acetylesterase that acts as an exo-deacetylase. Shows activity towards naphtyl acetate, triacetin, as well as towards glucose- and xylose acetates. Liberates acetic acid from xylo-oligomers. The sequence is that of Acetylesterase from Hypocrea jecorina (Trichoderma reesei).